Reading from the N-terminus, the 155-residue chain is Keratin-associated protein 4-7 (155 aa).

Repeat copies occupy residues 5–9, 24–28, 29–33, 34–38, 44–48, 49–53, 54–58, 59–63, 64–68, 69–73, 74–78, 79–83, 84–88, 89–93, 94–98, 99–103, 104–108, 109–113, 114–118, and 119–123. The interval 5–123 is 20 X 5 AA repeats of C-C-[GIKRQVHEML]-[SPTRV]-[STVQRCP]; sequence CCGSVCSDQG…CCRPCCCLRP (119 aa).

Belongs to the KRTAP type 4 family. Interacts with hair keratins. Expressed in the hair follicles.

In terms of biological role, in the hair cortex, hair keratin intermediate filaments are embedded in an interfilamentous matrix, consisting of hair keratin-associated proteins (KRTAP), which are essential for the formation of a rigid and resistant hair shaft through their extensive disulfide bond cross-linking with abundant cysteine residues of hair keratins. The matrix proteins include the high-sulfur and high-glycine-tyrosine keratins. The protein is Keratin-associated protein 4-7 (KRTAP4-7) of Homo sapiens (Human).